The sequence spans 83 residues: Small ribosomal subunit protein bS16 (83 aa).

This sequence belongs to the bacterial ribosomal protein bS16 family.

This chain is Small ribosomal subunit protein bS16, found in Pseudomonas fluorescens (strain SBW25).